The primary structure comprises 258 residues: Tropinone reductase-like 3 (258 aa).

19 to 43 (IVTASTQGIGFAIAYRLGLEGAAVV) contacts NAD(+). Residue Ser150 coordinates substrate. Catalysis depends on Tyr163, which acts as the Proton acceptor.

Belongs to the short-chain dehydrogenases/reductases (SDR) family.

In terms of biological role, has no tropinone reductase activity. In Erythroxylum coca (Coca plant), this protein is Tropinone reductase-like 3.